A 191-amino-acid polypeptide reads, in one-letter code: Fe/S biogenesis protein NfuA (191 aa).

Positions 149 and 152 each coordinate [4Fe-4S] cluster.

It belongs to the NfuA family. Homodimer. The cofactor is [4Fe-4S] cluster.

In terms of biological role, involved in iron-sulfur cluster biogenesis. Binds a 4Fe-4S cluster, can transfer this cluster to apoproteins, and thereby intervenes in the maturation of Fe/S proteins. Could also act as a scaffold/chaperone for damaged Fe/S proteins. The polypeptide is Fe/S biogenesis protein NfuA (Klebsiella pneumoniae (strain 342)).